We begin with the raw amino-acid sequence, 296 residues long: Glycine--tRNA ligase alpha subunit (296 aa).

It belongs to the class-II aminoacyl-tRNA synthetase family. In terms of assembly, tetramer of two alpha and two beta subunits.

It is found in the cytoplasm. The catalysed reaction is tRNA(Gly) + glycine + ATP = glycyl-tRNA(Gly) + AMP + diphosphate. This Listeria monocytogenes serotype 4a (strain HCC23) protein is Glycine--tRNA ligase alpha subunit.